A 373-amino-acid polypeptide reads, in one-letter code: Peptide chain release factor 2 (373 aa).

The residue at position 251 (glutamine 251) is an N5-methylglutamine.

It belongs to the prokaryotic/mitochondrial release factor family. In terms of processing, methylated by PrmC. Methylation increases the termination efficiency of RF2.

The protein localises to the cytoplasm. In terms of biological role, peptide chain release factor 2 directs the termination of translation in response to the peptide chain termination codons UGA and UAA. This chain is Peptide chain release factor 2, found in Salinispora tropica (strain ATCC BAA-916 / DSM 44818 / JCM 13857 / NBRC 105044 / CNB-440).